We begin with the raw amino-acid sequence, 436 residues long: MSEQNILKTPKGDRIAIVSGLRTPFAKQATAFHHVPALDMGKLVVNEMLERLNFNKSEIDQLVFGQVVQMPEAPNIAREIVLGTGMPVSVDAYSVSRACATSFQAIANVAESIMAGSVTVGIAGGADSSSVLPIGVSKKLAGSLVDLNKARTLGQRLKIFSKLRLKDLLPVPPAVAEYSTGLSMGQTAEQMAKTHNISREDQDALAHRSHSLATQAWADGKLKDEVMTAHLPPYKSFIEEDNNIRKNSTVEGYAKLKPVFDRQHGTVTAANATPLTDGAAAVLMMSESKAKALGYEILGYVRSFAFSAIGVEKDMLMGPAHATPIALDRAGITLADLDLIEMHEAFASQTLANMKMFASDKFAQEHLGRSKAIGEINMDKFNVLGGSLAYGHPFAATGARLITQSLYELKRRGGGLALTTACAAGGLGAAFVLESA.

Cys99 acts as the Acyl-thioester intermediate in catalysis. Residues His392 and Cys422 each act as proton acceptor in the active site.

The protein belongs to the thiolase-like superfamily. Thiolase family. In terms of assembly, heterotetramer of two alpha chains (FadJ) and two beta chains (FadI).

It is found in the cytoplasm. The catalysed reaction is an acyl-CoA + acetyl-CoA = a 3-oxoacyl-CoA + CoA. Its pathway is lipid metabolism; fatty acid beta-oxidation. Functionally, catalyzes the final step of fatty acid oxidation in which acetyl-CoA is released and the CoA ester of a fatty acid two carbons shorter is formed. The protein is 3-ketoacyl-CoA thiolase of Pseudoalteromonas translucida (strain TAC 125).